The sequence spans 558 residues: Magnesium-chelatase 60 kDa subunit (558 aa).

Disordered stretches follow at residues 234 to 268 (MPAS…GEEM) and 298 to 325 (MARG…MGRL). Residues 240–254 (APPEPEPEPPEDQPD) are compositionally biased toward acidic residues. Positions 298–308 (MARGATGTGSA) are enriched in low complexity. The 180-residue stretch at 376–555 (VLIFAVDASG…HKLSNVLGAA (180 aa)) folds into the VWFA domain.

Belongs to the Mg-chelatase subunits D/I family.

It catalyses the reaction protoporphyrin IX + Mg(2+) + ATP + H2O = Mg-protoporphyrin IX + ADP + phosphate + 3 H(+). The protein operates within porphyrin-containing compound metabolism; bacteriochlorophyll biosynthesis. In terms of biological role, involved in bacteriochlorophyll biosynthesis; introduces a magnesium ion into protoporphyrin IX to yield Mg-protoporphyrin IX. This is Magnesium-chelatase 60 kDa subunit (bchD) from Cereibacter sphaeroides (strain ATCC 17023 / DSM 158 / JCM 6121 / CCUG 31486 / LMG 2827 / NBRC 12203 / NCIMB 8253 / ATH 2.4.1.) (Rhodobacter sphaeroides).